Reading from the N-terminus, the 222-residue chain is Small ribosomal subunit protein uS2 (222 aa).

The protein belongs to the universal ribosomal protein uS2 family.

This Karelsulcia muelleri (strain GWSS) (Sulcia muelleri) protein is Small ribosomal subunit protein uS2.